We begin with the raw amino-acid sequence, 208 residues long: Microcin J25-processing protein McjB (208 aa).

Its subcellular location is the cytoplasm. Along with McjC, necessary and sufficient to process the inactive microcin J25 (McjA) precursor into the active peptide. The polypeptide is Microcin J25-processing protein McjB (mcjB) (Escherichia coli).